Reading from the N-terminus, the 49-residue chain is Light-harvesting protein B800/850/890 alpha-3 chain (49 aa).

Residues 1 to 14 lie on the Cytoplasmic side of the membrane; it reads MNQARIWLVVKPSV. A helical membrane pass occupies residues 15-35; sequence GLPLLLGVVLLIALLVHGAIL. Residue His-31 coordinates a bacteriochlorophyll. Residues 36-49 are Periplasmic-facing; the sequence is TNTSWYPTYFEGNW.

This sequence belongs to the antenna complex alpha subunit family. The core complex is formed by different alpha and beta chains, binding bacteriochlorophyll molecules, and arranged most probably in tetrameric structures disposed around the reaction center. The non-pigmented gamma chains may constitute additional components.

Its subcellular location is the cell inner membrane. Its function is as follows. Antenna complexes are light-harvesting systems, which transfer the excitation energy to the reaction centers. The protein is Light-harvesting protein B800/850/890 alpha-3 chain of Halorhodospira halophila (strain DSM 244 / SL1) (Ectothiorhodospira halophila (strain DSM 244 / SL1)).